Here is a 167-residue protein sequence, read N- to C-terminus: Small ribosomal subunit protein uS5 (167 aa).

In terms of domain architecture, S5 DRBM spans 12–75 (LQEKLIAVNR…EKARRNMVTV (64 aa)).

This sequence belongs to the universal ribosomal protein uS5 family. As to quaternary structure, part of the 30S ribosomal subunit. Contacts proteins S4 and S8.

Functionally, with S4 and S12 plays an important role in translational accuracy. In terms of biological role, located at the back of the 30S subunit body where it stabilizes the conformation of the head with respect to the body. The chain is Small ribosomal subunit protein uS5 from Shewanella oneidensis (strain ATCC 700550 / JCM 31522 / CIP 106686 / LMG 19005 / NCIMB 14063 / MR-1).